The following is a 348-amino-acid chain: Histidinol-phosphate aminotransferase (348 aa).

An N6-(pyridoxal phosphate)lysine modification is found at lysine 211.

The protein belongs to the class-II pyridoxal-phosphate-dependent aminotransferase family. Histidinol-phosphate aminotransferase subfamily. Homodimer. Pyridoxal 5'-phosphate serves as cofactor.

It catalyses the reaction L-histidinol phosphate + 2-oxoglutarate = 3-(imidazol-4-yl)-2-oxopropyl phosphate + L-glutamate. It functions in the pathway amino-acid biosynthesis; L-histidine biosynthesis; L-histidine from 5-phospho-alpha-D-ribose 1-diphosphate: step 7/9. The sequence is that of Histidinol-phosphate aminotransferase from Chlorobaculum tepidum (strain ATCC 49652 / DSM 12025 / NBRC 103806 / TLS) (Chlorobium tepidum).